Consider the following 655-residue polypeptide: RNA-binding protein EWS (655 aa).

The tract at residues 1-285 is EAD (Gln/Pro/Thr-rich); it reads MASTDYSTYS…GVYGQESGGF (285 aa). 31 tandem repeats follow at residues 8–16, 17–27, 28–34, 35–42, 43–50, 51–59, 60–68, 69–75, 76–84, 85–91, 92–110, 111–116, 117–125, 126–156, 157–163, 164–170, 171–177, 178–188, 189–193, 194–201, 202–206, 207–212, 213–218, 219–224, 225–230, 231–238, 239–245, 246–252, 253–259, 260–276, and 277–285. The interval 8–285 is 31 X approximate tandem repeats; that stretch reads TYSQAAAQQG…GVYGQESGGF (278 aa). A disordered region spans residues 121–350; the sequence is QPAYPTYGQQ…EGPDLDLGLP (230 aa). Polar residues-rich tracts occupy residues 127-137 and 146-172; these read YGQQPTATAPT and AETS…NYSY. Low complexity predominate over residues 192-266; the sequence is PTSYSSSQPT…QSSSYGQQSS (75 aa). Residues 256–285 form the IQ domain; sequence QQSSSYGQQSSFRQDHPSSMGVYGQESGGF. Serine 266 bears the Phosphoserine; by PKC mark. Asymmetric dimethylarginine is present on residues arginine 300, arginine 302, arginine 304, arginine 309, arginine 314, arginine 317, and arginine 321. Gly residues predominate over residues 308–334; it reads DRGGMSRGGRGGGRGGLGAGERGGFNK. Over residues 335-350 the composition is skewed to low complexity; it reads PGGPMDEGPDLDLGLP. Residues 360-446 enclose the RRM domain; sequence SAIYVQGLND…SKLKVSLARK (87 aa). Lysine 438 carries the N6-acetyllysine modification. Disordered stretches follow at residues 447–524 and 544–655; these read KPPM…WQCP and APKP…DRPY. Arginine 454 and arginine 463 each carry asymmetric dimethylarginine. Residue arginine 470 is modified to Asymmetric dimethylarginine; alternate. Arginine 470 is modified (omega-N-methylarginine; alternate). Over residues 471 to 489 the composition is skewed to gly residues; that stretch reads GGPGGPGGPGGPMGRMGGR. Residue arginine 485 is modified to Omega-N-methylarginine. Arginine 489 bears the Asymmetric dimethylarginine; by PRMT8 mark. Arginine 493, arginine 499, and arginine 502 each carry asymmetric dimethylarginine. Arginine 505 is subject to Asymmetric dimethylarginine; alternate. Omega-N-methylarginine; alternate is present on arginine 505. The RanBP2-type zinc finger occupies 517–548; it reads RAGDWQCPNPGCGNQNFAWRTECNQCKAPKPE. Pro residues predominate over residues 550-559; sequence FLPPPFPPPG. An asymmetric dimethylarginine mark is found at arginine 562 and arginine 564. Gly residues predominate over residues 565–590; it reads GGPGGMRGGRGGLMDRGGPGGMFRGG. Asymmetric dimethylarginine; alternate; by PRMT8 is present on arginine 571. An Omega-N-methylarginine; alternate; by PRMT8 modification is found at arginine 571. Residues arginine 574, arginine 580, arginine 588, and arginine 591 each carry the asymmetric dimethylarginine modification. A compositionally biased stretch (basic and acidic residues) spans 591 to 605; the sequence is RGGDRGGFRGGRGMD. Arginine 595 is subject to Asymmetric dimethylarginine; alternate; by PRMT8. At arginine 595 the chain carries Omega-N-methylarginine; alternate; by PRMT8. Residue arginine 599 is modified to Asymmetric dimethylarginine. The residue at position 602 (arginine 602) is an Asymmetric dimethylarginine; by PRMT8. Arginine 606 is modified (asymmetric dimethylarginine; alternate; by PRMT8). Residue arginine 606 is modified to Omega-N-methylarginine; alternate; by PRMT8. Gly residues predominate over residues 606 to 617; it reads RGGFGGGRRGGP. Arginine 614 carries the asymmetric dimethylarginine; alternate modification. Arginine 614 bears the Omega-N-methylarginine; alternate mark. Asymmetric dimethylarginine occurs at positions 632 and 635. The short motif at 638–655 is the Nuclear localization signal element; it reads PGKMDKGEHRQERRDRPY. The segment covering 640-655 has biased composition (basic and acidic residues); that stretch reads KMDKGEHRQERRDRPY.

This sequence belongs to the RRM TET family. As to quaternary structure, binds RNA, POLR2C, SF1 and calmodulin. Interacts with PTK2B and TDRD3. Forms a complex with REC8, PRDM9, SYCP3 and SYCP1; complex formation is dependent of phosphorylated form of REC8 and requires PRDM9 bound to hotspot DNA; EWSR1 joins PRDM9 with the chromosomal axis through REC8. Phosphorylated; calmodulin-binding inhibits phosphorylation of Ser-266. In terms of processing, highly methylated on arginine residues. Methylation is mediated by PRMT1 and, at lower level by PRMT8.

The protein localises to the nucleus. It localises to the cytoplasm. Its subcellular location is the cell membrane. Its function is as follows. Binds to ssRNA containing the consensus sequence 5'-AGGUAA-3'. Might function as a transcriptional repressor. The protein is RNA-binding protein EWS (Ewsr1) of Mus musculus (Mouse).